Consider the following 400-residue polypeptide: Bifunctional arginine demethylase and lysyl-hydroxylase psr-1 (400 aa).

Positions 146–310 constitute a JmjC domain; the sequence is RKTKKLSEDY…LVWPKTVKGR (165 aa). Residue Thr189 coordinates substrate. Residues His192 and Asp194 each contribute to the Fe cation site. Residue Asn202 participates in 2-oxoglutarate binding. A substrate-binding site is contributed by Lys209. His278 provides a ligand contact to Fe cation. Thr290 provides a ligand contact to 2-oxoglutarate. The segment at 342–400 is disordered; that stretch reads DMNESSSDSSSSSSSSDDSSDESDCDDSGRCGGRKRKNDDRSNECPEKMSTTYFQNSLV. Residues 346–358 are compositionally biased toward low complexity; the sequence is SSSDSSSSSSSSD. Residues 378–388 are compositionally biased toward basic and acidic residues; sequence KNDDRSNECPE. A compositionally biased stretch (polar residues) spans 390-400; that stretch reads MSTTYFQNSLV.

Belongs to the JMJD6 family. As to quaternary structure, interacts with ced-5 and ced-12. The cofactor is Fe(2+).

It localises to the nucleus. Its function is as follows. Dioxygenase that can both act as a histone arginine demethylase and a lysyl-hydroxylase. The polypeptide is Bifunctional arginine demethylase and lysyl-hydroxylase psr-1 (psr-1) (Caenorhabditis elegans).